A 207-amino-acid chain; its full sequence is Protein N-terminal glutamine amidohydrolase (207 aa).

Catalysis depends on residues cysteine 30, histidine 83, and aspartate 99.

Belongs to the NTAQ1 family. As to quaternary structure, monomer.

It is found in the cytoplasm. Its subcellular location is the cytosol. The protein localises to the nucleus. The catalysed reaction is N-terminal L-glutaminyl-[protein] + H2O = N-terminal L-glutamyl-[protein] + NH4(+). In terms of biological role, mediates the side-chain deamidation of N-terminal glutamine residues to glutamate, an important step in N-end rule pathway of protein degradation. Conversion of the resulting N-terminal glutamine to glutamate renders the protein susceptible to arginylation, polyubiquitination and degradation as specified by the N-end rule. Does not act on substrates with internal or C-terminal glutamine and does not act on non-glutamine residues in any position. Does not deaminate acetylated N-terminal glutamine. With the exception of proline, all tested second-position residues on substrate peptides do not greatly influence the activity. In contrast, a proline at position 2, virtually abolishes deamidation of N-terminal glutamine. In Bos taurus (Bovine), this protein is Protein N-terminal glutamine amidohydrolase (NTAQ1).